Consider the following 207-residue polypeptide: Urease accessory protein UreE (207 aa).

The tract at residues 171 to 207 is disordered; it reads HHGHAHSHSHSHDHDHDHDHDHQHGPGCAHGHGHDHH. The span at 180–194 shows a compositional bias: basic and acidic residues; the sequence is HSHDHDHDHDHDHQH.

This sequence belongs to the UreE family.

Its subcellular location is the cytoplasm. Functionally, involved in urease metallocenter assembly. Binds nickel. Probably functions as a nickel donor during metallocenter assembly. This chain is Urease accessory protein UreE, found in Burkholderia lata (strain ATCC 17760 / DSM 23089 / LMG 22485 / NCIMB 9086 / R18194 / 383).